The sequence spans 595 residues: DNA primase (595 aa).

Residues 38 to 62 (CPFHQEKTPSFTVSDSKRFFYCFGC) form a CHC2-type zinc finger. The Toprim domain occupies 250 to 332 (NHSILVEGYF…EKKISFIRLP (83 aa)). 3 residues coordinate Mg(2+): Glu256, Asp300, and Asp302.

This sequence belongs to the DnaG primase family. Monomer. Interacts with DnaB. Zn(2+) serves as cofactor. It depends on Mg(2+) as a cofactor.

It catalyses the reaction ssDNA + n NTP = ssDNA/pppN(pN)n-1 hybrid + (n-1) diphosphate.. Functionally, RNA polymerase that catalyzes the synthesis of short RNA molecules used as primers for DNA polymerase during DNA replication. The polypeptide is DNA primase (Rickettsia felis (strain ATCC VR-1525 / URRWXCal2) (Rickettsia azadi)).